A 503-amino-acid chain; its full sequence is Probable cytosol aminopeptidase (503 aa).

The Mn(2+) site is built by K270 and D275. Residue K282 is part of the active site. D293, D352, and E354 together coordinate Mn(2+). R356 is an active-site residue.

The protein belongs to the peptidase M17 family. The cofactor is Mn(2+).

It is found in the cytoplasm. It carries out the reaction Release of an N-terminal amino acid, Xaa-|-Yaa-, in which Xaa is preferably Leu, but may be other amino acids including Pro although not Arg or Lys, and Yaa may be Pro. Amino acid amides and methyl esters are also readily hydrolyzed, but rates on arylamides are exceedingly low.. It catalyses the reaction Release of an N-terminal amino acid, preferentially leucine, but not glutamic or aspartic acids.. Its function is as follows. Presumably involved in the processing and regular turnover of intracellular proteins. Catalyzes the removal of unsubstituted N-terminal amino acids from various peptides. The chain is Probable cytosol aminopeptidase from Salmonella agona (strain SL483).